The chain runs to 493 residues: MVGFEDHIAAITRNYQVNPRLDYRTVTAVNGPLVILDNIRGPKFSEIVTLTLGDGTQRKGQVLEIQGKRAVVQVFEGTIGIDAKHTRCEFSGDILKMPVSEDSLGRIFNGSGKPVDKGPNVLAEEYLDIQGQPINPSVRVYPQEMIQTGISAIDTMNSIARGQKIPIFSAAGLPHNEIAAQICRQAGLVKKSGKGVIDDHEDNFAIVFAAMGVNMETASFFKRDFEESGSMDRTALFLNLADHPTIERIITPRLALTTAEYLAYQCEKHVLVLLTDMSSYADALREVSAAREEVPGRRGYPGYMYTDLSTIYERAGRIQGRNGSITQIPILTMPNDDITHPIPDLTGYITEGQIFIDRQINNRQIYPPINVLPSLSRLMKSAIGDDMTRGDHSEVSNQMYANYAIGKDVQAMKAVVGEEALSSEDKLYLEFLERFESSFVGQNHYENRDIFNSLDLGWSLLRTFPSNLLKRITEKTIKQYYSRSSKGTVDSTN.

It belongs to the ATPase alpha/beta chains family. V-ATPase is a heteromultimeric enzyme composed of a peripheral catalytic V1 complex (main components: subunits A, B, C, D, E, and F) attached to an integral membrane V0 proton pore complex (main component: the proteolipid protein).

The protein localises to the cytoplasmic vesicle membrane. It localises to the endosome membrane. Its subcellular location is the contractile vacuole membrane. Its function is as follows. Vacuolar ATPase is responsible for acidifying a variety of intracellular compartments in eukaryotic cells. The B subunit is non-catalytic but combines with other subunits to form the catalytic complex. V-ATPase is responsible for energizing electrophoretic K(+)/2H(+) antiport by generating a transmembrane voltage of more than 200 mV. In Dictyostelium discoideum (Social amoeba), this protein is V-type proton ATPase subunit B (vatB).